Consider the following 360-residue polypeptide: G-protein coupled receptor 15 (360 aa).

The Extracellular portion of the chain corresponds to 1-33; it reads MEPATALLIVDYYDYTSPDPPFLETPSHLSYTS. Residues 34–54 traverse the membrane as a helical segment; that stretch reads VFLPIFYTVVFLTGVVGNFIL. Topologically, residues 55–69 are cytoplasmic; the sequence is MIALHFKRGNRRLID. A helical membrane pass occupies residues 70-90; it reads IFIINLAASDFIFLVTVPLWM. Residues 91–120 are Extracellular-facing; that stretch reads DKEASLGLWRTGSFLCKGSSYVISVNMHCS. The chain crosses the membrane as a helical span at residues 121 to 141; it reads VFLLTCMSMDRYLAIMHPALA. At 142–149 the chain is on the cytoplasmic side; sequence KRLRRRSS. A helical membrane pass occupies residues 150–170; that stretch reads AYAVCAVVWIISCVLGLPTLL. Over 171–192 the chain is Extracellular; it reads SRELTHIEGKPYCAEKKPTSLK. A helical membrane pass occupies residues 193–213; that stretch reads LMWGLVALITTFFVPLLSIVT. At 214-239 the chain is on the cytoplasmic side; that stretch reads CYCCITRRLCAHYQQSGKHNKKLKKS. The chain crosses the membrane as a helical span at residues 240–260; the sequence is IKIVIIAVAAFTVSWVPFNTF. At 261–284 the chain is on the extracellular side; it reads KLLAIVSGFQPEGLFHSEALQLAM. Residues 285 to 305 form a helical membrane-spanning segment; sequence NVTGPLAFASSCVNPLIYYVF. The Cytoplasmic segment spans residues 306–360; sequence DSYIRRAIVRCLCPCLKTHNFGSSTETSDSHLTKALSNFIHAEDFIRRRKRSVSL. Phosphoserine is present on Ser-359.

This sequence belongs to the G-protein coupled receptor 1 family. As to quaternary structure, interacts with adapter YWHAE; this interaction promotes ER-to-Golgi transport of GPR15. Phosphorylation is necessary for YWHAE binding and efficient surface expression. Post-translationally, O-glycosylated. Sialylated O-glycans in the N-terminal tail inhibits binding of GPR15LG. In terms of processing, sulfation is required for efficient binding of GPR15LG. As to expression, highly expressed in gut tissues and lymphoid organs, largely restricted to TCRbeta+ cells. Expressed in fetal thymic dendritic epidermal T-cell precursors.

Its subcellular location is the cell membrane. In terms of biological role, g protein-coupled receptor that plays an important role in immune homeostasis. Acts via its natural ligand GPR15LG, a chemokine-like polypeptide strongly expressed in gastrointestinal tissues. GPR15-GPR15LG signaling axis regulates intestinal homeostasis and inflammation through the migration of immune cells. Controls thereby the specific homing of T-cells, particularly FOXP3+ regulatory T-cells (Tregs), to the large intestine lamina propria. Also required for skin localization of thymus-derived dendritic epidermal T-cells. Plays an important role in mediating cytoprotective function as well as angiogenesis of thrombomodulin. Mechanistically, preferentially signals through the Gi/o pathway to inhibit adenylate cyclase activity and activate a phosphatidylinositol-calcium second messenger system that regulates the release of Ca(2+) ions from intracellular stores. The chain is G-protein coupled receptor 15 (Gpr15) from Mus musculus (Mouse).